The sequence spans 719 residues: Protein psiI (719 aa).

Residues 1–19 form the signal peptide; sequence MKIIFNLLILFSLVNFINS. Over 20 to 658 the chain is Extracellular; that stretch reads QSTTQATTLK…ICQTGAIVST (639 aa). Residues Asn-62, Asn-105, Asn-118, Asn-151, Asn-315, Asn-379, Asn-454, Asn-488, Asn-500, Asn-538, Asn-592, and Asn-629 are each glycosylated (N-linked (GlcNAc...) asparagine). The PA14 domain maps to 119–261; the sequence is LTLNPSTGTY…YDYCGVCYGD (143 aa). The helical transmembrane segment at 659-679 threads the bilayer; sequence AVVASVVVVGAVVLGAAIFAG. Over 680-719 the chain is Cytoplasmic; the sequence is KKGYDHWKANQGQVFASSNANPLYQQSNNGGENALFEAPQ.

It belongs to the prespore-cell-inducing factor family.

It is found in the membrane. This is Protein psiI (psiI) from Dictyostelium discoideum (Social amoeba).